Reading from the N-terminus, the 342-residue chain is Maltose regulon regulatory protein MalI (342 aa).

An HTH lacI-type domain is found at 7-61; sequence ITIHDVALAAGVSVSTVSLVLSGKGRISTATGERVNAAIEELGFVRNRQASALRG. Positions 9–28 form a DNA-binding region, H-T-H motif; it reads IHDVALAAGVSVSTVSLVLS.

Functionally, repressor for the malX and malY genes. Also regulates its own expression. Binds maltose as an inducer. The protein is Maltose regulon regulatory protein MalI (malI) of Escherichia coli (strain K12).